The chain runs to 249 residues: Long form salivary protein D7L (249 aa).

The signal sequence occupies residues 1-19 (MNAVITSLVFISLVGVGYS). Cystine bridges form between Cys-36/Cys-66 and Cys-62/Cys-112. Trp-49 provides a ligand contact to thromboxane A2. Position 52 (Trp-52) interacts with leukotriene C4. Tyr-63 contributes to the thromboxane A2 binding site. The leukotriene C4 site is built by Gly-136 and Lys-154. Lys-154 is a binding site for thromboxane A2. Cystine bridges form between Cys-162-Cys-178, Cys-174-Cys-221, and Cys-211-Cys-230.

The protein belongs to the PBP/GOBP family.

The protein localises to the secreted. In terms of biological role, modulates blood feeding of female sandflies on vertebrate species by binding and sequestering different mediators involved in the host response. Binds leukotriene C4, leukotriene D4, leukotriene E4 and U-46619, a stable analog of thromboxane A2. Does not bind histamine or serotonin. Inhibits platelet aggregation induced by low concentrations of collagen in thromboxane A2-dependent manner. The sequence is that of Long form salivary protein D7L from Phlebotomus duboscqi (Sandfly).